The sequence spans 21 residues: Protein IroK (21 aa).

Possible increased expression of this protein (due to mutations upstream of the start codon) is proposed to be responsible for resistance to 3-hydroxypropionic acid (3-HP). The chain is Protein IroK (iroK) from Escherichia coli (strain K12).